A 141-amino-acid polypeptide reads, in one-letter code: Hemoglobin subunit alpha-1/2 (141 aa).

The Globin domain maps to valine 1 to arginine 141. At serine 3 the chain carries Phosphoserine. N6-succinyllysine is present on lysine 7. Threonine 8 bears the Phosphothreonine mark. Lysine 11 bears the N6-succinyllysine mark. Lysine 16 is modified (N6-acetyllysine; alternate). Lysine 16 bears the N6-succinyllysine; alternate mark. Tyrosine 24 is subject to Phosphotyrosine. A Phosphoserine modification is found at serine 35. At lysine 40 the chain carries N6-succinyllysine. Position 49 is a phosphoserine (serine 49). Histidine 58 is a binding site for O2. A heme b-binding site is contributed by histidine 87. Serine 102 bears the Phosphoserine mark. Threonine 108 is subject to Phosphothreonine. Serine 124 carries the phosphoserine modification. Phosphothreonine occurs at positions 134 and 137. Residue serine 138 is modified to Phosphoserine.

It belongs to the globin family. Heterotetramer of two alpha chains and two beta chains. In terms of tissue distribution, red blood cells.

Involved in oxygen transport from the lung to the various peripheral tissues. The chain is Hemoglobin subunit alpha-1/2 from Mustela putorius (European polecat).